A 414-amino-acid chain; its full sequence is Secernin-1 (414 aa).

Belongs to the peptidase C69 family. Secernin subfamily.

It is found in the cytoplasm. Functionally, regulates exocytosis in mast cells. Increases both the extent of secretion and the sensitivity of mast cells to stimulation with calcium. This is Secernin-1 (Scrn1) from Rattus norvegicus (Rat).